We begin with the raw amino-acid sequence, 437 residues long: Eukaryotic peptide chain release factor subunit 1 (437 aa).

N-acetylalanine is present on Ala2. The short motif at 61 to 64 is the NIKS motif; plays an important role in translational termination element; that stretch reads NIKS. Lys63 is subject to 4-hydroxylysine. Lys87 participates in a covalent cross-link: Glycyl lysine isopeptide (Lys-Gly) (interchain with G-Cter in SUMO2). Gln185 is subject to N5-methylglutamine. Position 347 is a phosphothreonine (Thr347). A Glycyl lysine isopeptide (Lys-Gly) (interchain with G-Cter in SUMO2) cross-link involves residue Lys404.

It belongs to the eukaryotic release factor 1 family. In terms of assembly, component of the eRF1-eRF3-GTP ternary complex, composed of ETF1/ERF1 and eRF3 (GSPT1/ERF3A or GSPT2/ERF3B) and GTP. Component of the transient SURF (SMG1-UPF1-eRF1-eRF3) complex. Interacts with JMJD4. The ETF1-GSPT1 complex interacts with JMJD4. Hydroxylation at Lys-63 by JMJD4 promotes its translational termination efficiency. Post-translationally, methylated at Gln-185 by N6AMT1. In terms of processing, ubiquitinated via 'Lys-6'-linked polyubiquitin chains by RNF14 and RNF25 in response to ribosome collisions (ribosome stalling), leading to its degradation by the proteasome and rescue of stalled ribosomes.

The protein resides in the cytoplasm. In terms of biological role, component of the eRF1-eRF3-GTP ternary complex, a ternary complex that mediates translation termination in response to the termination codons. The eRF1-eRF3-GTP complex binds to a stop codon in the ribosomal A-site. ETF1/ERF1 is responsible for stop codon recognition and inducing hydrolysis of peptidyl-tRNA. Following GTP hydrolysis, eRF3 (GSPT1/ERF3A or GSPT2/ERF3B) dissociates, permitting ETF1/eRF1 to accommodate fully in the A-site, followed by hydrolysis of peptidyl-tRNA. Component of the transient SURF complex which recruits UPF1 to stalled ribosomes in the context of nonsense-mediated decay (NMD) of mRNAs containing premature stop codons. Required for SHFL-mediated translation termination which inhibits programmed ribosomal frameshifting (-1PRF) of mRNA from viruses and cellular genes. This is Eukaryotic peptide chain release factor subunit 1 (ETF1) from Pongo abelii (Sumatran orangutan).